We begin with the raw amino-acid sequence, 327 residues long: DNA-directed RNA polymerase subunit alpha (327 aa).

Positions 1-233 are alpha N-terminal domain (alpha-NTD); the sequence is MVREKVKVST…NLFIPFLHVE (233 aa). The segment at 266 to 327 is alpha C-terminal domain (alpha-CTD); sequence EQGFQYIFID…KKILDILEKK (62 aa).

It belongs to the RNA polymerase alpha chain family. As to quaternary structure, in plastids the minimal PEP RNA polymerase catalytic core is composed of four subunits: alpha, beta, beta', and beta''. When a (nuclear-encoded) sigma factor is associated with the core the holoenzyme is formed, which can initiate transcription.

It is found in the plastid. The protein resides in the chloroplast. It carries out the reaction RNA(n) + a ribonucleoside 5'-triphosphate = RNA(n+1) + diphosphate. In terms of biological role, DNA-dependent RNA polymerase catalyzes the transcription of DNA into RNA using the four ribonucleoside triphosphates as substrates. The sequence is that of DNA-directed RNA polymerase subunit alpha from Barbarea verna (Land cress).